A 202-amino-acid chain; its full sequence is D-alanyl-D-alanine dipeptidase (202 aa).

Zn(2+) contacts are provided by His-116 and Asp-123. Glu-181 (proton donor/acceptor) is an active-site residue. Residue His-184 coordinates Zn(2+).

It belongs to the peptidase M15D family. It depends on Zn(2+) as a cofactor.

It carries out the reaction D-alanyl-D-alanine + H2O = 2 D-alanine. Catalyzes hydrolysis of the D-alanyl-D-alanine dipeptide. The sequence is that of D-alanyl-D-alanine dipeptidase (vanXB) from Enterococcus faecalis (strain ATCC 700802 / V583).